The primary structure comprises 950 residues: Oxysterol-binding protein-related protein 1 (950 aa).

Positions 1 to 237 (MNTEAEQQLL…NKVIYKALKR (237 aa)) are interaction with RAB7A. ANK repeat units follow at residues 47 to 76 (LGWT…EVNV), 80 to 109 (MGDT…DTTI), and 175 to 204 (LGNT…DPNL). A PH domain is found at 235 to 334 (LKRYEGPLWK…WLEAIEEHSA (100 aa)). A coiled-coil region spans residues 430 to 463 (NFKLEQEQEKNKILSEALETLATEHHELEQSLVK). The FFAT motif lies at 469–485 (SILSEDEFYDALSDSES). S499 is modified (phosphoserine). Over residues 501-521 (EEEGEHLGSRKHRMSEEKDCG) the composition is skewed to basic and acidic residues. Disordered regions lie at residues 501–527 (EEEG…DALS), 795–816 (KKNT…LDEM), and 881–913 (MENG…SEED). A coiled-coil region spans residues 877 to 913 (DIRAMENGEIDQASEEKKRLEEKQRAARKNRSKSEED). Over residues 890–901 (SEEKKRLEEKQR) the composition is skewed to basic and acidic residues.

It belongs to the OSBP family. As to quaternary structure, interacts (via FFAT motif) with VAPA and VAPB. Interacts with the GTP-bound form of RAB7A. Interacts with OAS1B. Interacts (via FFAT motif) with MOSPD2 (via MSP domain).

The protein resides in the late endosome. Functionally, binds phospholipids; exhibits strong binding to phosphatidic acid and weak binding to phosphatidylinositol 3-phosphate. Stabilizes GTP-bound RAB7A on late endosomes/lysosomes and alters functional properties of late endocytic compartments via its interaction with RAB7A. Binds 25-hydroxycholesterol and cholesterol. The polypeptide is Oxysterol-binding protein-related protein 1 (Homo sapiens (Human)).